Consider the following 815-residue polypeptide: MREIHSLFSLSLFLISSSLSVALDYNVITPKEFLKDGDTLSSPDQVFQLGFFSLDQEEQPQHRFLGLWYMEPFAVVWVANRNNPLYGTSGFLNLSSLGDLQLFDGEHKALWSSSSSSTKASKTANNPLLKISCSGNLISSDGEEAVLWQSFDYPMNTILAGMKLGKNFKTQMEWSLSSWKTLKDPSPGDFTLSLDTRGLPQLILRKNGDSSYSYRLGSWNGLSFTGAPAMGRENSLFDYKFTSSAQEVNYSWTPRHRIVSRLVLNNTGKLHRFIQSKQNQWILANTAPEDECDYYSICGAYAVCGINSKNTPSCSCLQGFKPKSGRKWNISRGAYGCVHEIPTNCEKKDAFVKFPGLKLPDTSWSWYDAKNEMTLEDCKIKCSSNCSCTAYANTDIREGGKGCLLWFGDLVDMREYSSFGQDVYIRMGFAKIEFKGREVVGMVVGSVVAIAVVLVVVFACFRKKIMKRYRGENFRKGIEEEDLDLPIFDRKTISIATDDFSYVNFLGRGGFGPVYKGKLEDGQEIAVKRLSANSGQGVEEFKNEVKLIAKLQHRNLVRLLGCCIQGEECMLIYEYMPNKSLDFFIFDERRSTELDWKKRMNIINGVARGILYLHQDSRLRIIHRDLKAGNVLLDNDMNPKISDFGLAKSFGGDQSESSTNRVVGTYGYMPPEYAIDGHFSVKSDVFSFGVLVLEIITGKTNRGFRHADHDLNLLGHVWKMWVEDREIEVPEEEWLEETSVIPEVLRCIHVALLCVQQKPEDRPTMASVVLMFGSDSSLPHPTQPGFFTNRNVPDISSSLSLRSQNEVSITMLQGR.

The signal sequence occupies residues 1–22 (MREIHSLFSLSLFLISSSLSVA). The Extracellular portion of the chain corresponds to 23-438 (LDYNVITPKE…FAKIEFKGRE (416 aa)). The region spanning 25 to 152 (YNVITPKEFL…EEAVLWQSFD (128 aa)) is the Bulb-type lectin domain. 3 N-linked (GlcNAc...) asparagine glycosylation sites follow: Asn-93, Asn-249, and Asn-265. Positions 288 to 326 (PEDECDYYSICGAYAVCGINSKNTPSCSCLQGFKPKSGR) constitute an EGF-like domain. 2 cysteine pairs are disulfide-bonded: Cys-292/Cys-304 and Cys-298/Cys-314. N-linked (GlcNAc...) asparagine glycosylation is found at Asn-329 and Asn-385. Positions 345 to 428 (CEKKDAFVKF…FGQDVYIRMG (84 aa)) constitute a PAN domain. 2 disulfide bridges follow: Cys-378–Cys-403 and Cys-382–Cys-388. Residues 439–459 (VVGMVVGSVVAIAVVLVVVFA) form a helical membrane-spanning segment. Residues 460–815 (CFRKKIMKRY…EVSITMLQGR (356 aa)) lie on the Cytoplasmic side of the membrane. Positions 500 to 783 (FSYVNFLGRG…SDSSLPHPTQ (284 aa)) constitute a Protein kinase domain. Residues 506-514 (LGRGGFGPV) and Lys-528 contribute to the ATP site. Ser-534 bears the Phosphoserine mark. Residues 589-606 (RRSTELDWKKRMNIINGV) form a caM-binding region. Asp-625 functions as the Proton acceptor in the catalytic mechanism. Ser-642 is modified (phosphoserine). At Thr-659 the chain carries Phosphothreonine. A phosphoserine mark is found at Ser-797 and Ser-803. Thr-810 carries the phosphothreonine modification.

It belongs to the protein kinase superfamily. Ser/Thr protein kinase family. Interacts with PUB9, PUB13 and PUB14.

Its subcellular location is the cell membrane. The catalysed reaction is L-seryl-[protein] + ATP = O-phospho-L-seryl-[protein] + ADP + H(+). It carries out the reaction L-threonyl-[protein] + ATP = O-phospho-L-threonyl-[protein] + ADP + H(+). In Arabidopsis thaliana (Mouse-ear cress), this protein is G-type lectin S-receptor-like serine/threonine-protein kinase SD1-1 (SD11).